A 282-amino-acid chain; its full sequence is NAD(P)H-hydrate epimerase (282 aa).

A mitochondrion-targeting transit peptide spans Met-1–Tyr-53. The region spanning Ala-59–Leu-269 is the YjeF N-terminal domain. (6S)-NADPHX is bound at residue Asn-113–Asp-117. A K(+)-binding site is contributed by Asn-114. N6-succinyllysine is present on Lys-138. A K(+)-binding site is contributed by Asp-179. Residues Gly-183–Asp-189 and Asp-212 each bind (6S)-NADPHX. Ser-215 contributes to the K(+) binding site.

It belongs to the NnrE/AIBP family. As to quaternary structure, homodimer. Interacts with APOA1 and APOA2. K(+) is required as a cofactor. In terms of processing, undergoes physiological phosphorylation during sperm capacitation, downstream to PKA activation.

It is found in the mitochondrion. The protein resides in the secreted. The catalysed reaction is (6R)-NADHX = (6S)-NADHX. It carries out the reaction (6R)-NADPHX = (6S)-NADPHX. In terms of biological role, catalyzes the epimerization of the S- and R-forms of NAD(P)HX, a damaged form of NAD(P)H that is a result of enzymatic or heat-dependent hydration. This is a prerequisite for the S-specific NAD(P)H-hydrate dehydratase to allow the repair of both epimers of NAD(P)HX. Accelerates cholesterol efflux from endothelial cells to high-density lipoprotein (HDL) and thereby regulates angiogenesis. This chain is NAD(P)H-hydrate epimerase, found in Rattus norvegicus (Rat).